Here is a 153-residue protein sequence, read N- to C-terminus: Nascent polypeptide-associated complex subunit beta (153 aa).

Disordered stretches follow at residues 1 to 40 and 126 to 153; these read MSDVQERLKKLGLGARTGTGKGTPRRKVKRAPARSGADDK and LQKEKGEDDDEIPDLVEGENFEGEPKVE. A compositionally biased stretch (basic residues) spans 23 to 32; that stretch reads TPRRKVKRAP. The region spanning 36–101 is the NAC-A/B domain; the sequence is GADDKKLQLA…GEDKELTELV (66 aa). A compositionally biased stretch (acidic residues) spans 132–147; it reads EDDDEIPDLVEGENFE.

It belongs to the NAC-beta family. In terms of assembly, part of the nascent polypeptide-associated complex (NAC), consisting of EGD2 and EGD1. NAC associates with ribosomes via EGD1.

The protein resides in the cytoplasm. It localises to the nucleus. In terms of biological role, component of the nascent polypeptide-associated complex (NAC), a dynamic component of the ribosomal exit tunnel, protecting the emerging polypeptides from interaction with other cytoplasmic proteins to ensure appropriate nascent protein targeting. The NAC complex also promotes mitochondrial protein import by enhancing productive ribosome interactions with the outer mitochondrial membrane and blocks the inappropriate interaction of ribosomes translating non-secretory nascent polypeptides with translocation sites in the membrane of the endoplasmic reticulum. EGD1 may act as a transcription factor that exert a negative effect on the expression of several genes that are transcribed by RNA polymerase II. The chain is Nascent polypeptide-associated complex subunit beta (EGD1) from Gibberella zeae (strain ATCC MYA-4620 / CBS 123657 / FGSC 9075 / NRRL 31084 / PH-1) (Wheat head blight fungus).